We begin with the raw amino-acid sequence, 383 residues long: Succinate--CoA ligase [ADP-forming] subunit beta (383 aa).

Residues 9–241 enclose the ATP-grasp domain; sequence KEVLHKFNVS…YDEEVKEEIE (233 aa). ATP contacts are provided by residues Lys-46, 53–55, Glu-99, Ser-102, and Glu-107; that span reads GRG. The Mg(2+) site is built by Asn-196 and Asp-210. Substrate contacts are provided by residues Asn-261 and 318-320; that span reads GIM.

Belongs to the succinate/malate CoA ligase beta subunit family. In terms of assembly, heterotetramer of two alpha and two beta subunits. Mg(2+) serves as cofactor.

It carries out the reaction succinate + ATP + CoA = succinyl-CoA + ADP + phosphate. It catalyses the reaction GTP + succinate + CoA = succinyl-CoA + GDP + phosphate. It functions in the pathway carbohydrate metabolism; tricarboxylic acid cycle; succinate from succinyl-CoA (ligase route): step 1/1. In terms of biological role, succinyl-CoA synthetase functions in the citric acid cycle (TCA), coupling the hydrolysis of succinyl-CoA to the synthesis of either ATP or GTP and thus represents the only step of substrate-level phosphorylation in the TCA. The beta subunit provides nucleotide specificity of the enzyme and binds the substrate succinate, while the binding sites for coenzyme A and phosphate are found in the alpha subunit. The polypeptide is Succinate--CoA ligase [ADP-forming] subunit beta (Wolbachia sp. subsp. Drosophila simulans (strain wRi)).